We begin with the raw amino-acid sequence, 380 residues long: Endo-polygalacturonase (380 aa).

The N-terminal stretch at 1–17 is a signal peptide; the sequence is MVHILSSALSLLRLGAA. Residues 18–42 constitute a propeptide that is removed on maturation; the sequence is VSAAPAPAPTAAPNVADALAAVEKR. Cys46 and Cys64 are disulfide-bonded. PbH1 repeat units follow at residues 178–207, 208–229, 230–250, 259–280, 288–310, and 322–343; these read ASGL…DVGS, STDI…AINS, GTGI…SIGS, VSDV…RIKT, VSGV…VIEQ, and TSGV…SSSA. The active-site Proton donor is the Asp222. Cys224 and Cys240 form a disulfide bridge. The active site involves His244. A disulfide bridge links Cys350 with Cys353. A glycan (N-linked (GlcNAc...) asparagine) is linked at Asn361. A disulfide bridge links Cys371 with Cys380.

It belongs to the glycosyl hydrolase 28 family.

It is found in the secreted. The enzyme catalyses (1,4-alpha-D-galacturonosyl)n+m + H2O = (1,4-alpha-D-galacturonosyl)n + (1,4-alpha-D-galacturonosyl)m.. In Sclerotinia sclerotiorum (White mold), this protein is Endo-polygalacturonase (PG1).